A 261-amino-acid chain; its full sequence is DNA repair protein RecO (261 aa).

The protein belongs to the RecO family.

Functionally, involved in DNA repair and RecF pathway recombination. This is DNA repair protein RecO from Chlorobium limicola (strain DSM 245 / NBRC 103803 / 6330).